Here is a 210-residue protein sequence, read N- to C-terminus: Holliday junction resolvase RecU (210 aa).

Positions 1–34 are disordered; the sequence is MAFHYPNGQPYSNHETKQPKKQGRHTSPTTLYGK. 4 residues coordinate Mg(2+): threonine 90, aspartate 92, glutamate 105, and glutamine 124.

It belongs to the RecU family. It depends on Mg(2+) as a cofactor.

The protein resides in the cytoplasm. It catalyses the reaction Endonucleolytic cleavage at a junction such as a reciprocal single-stranded crossover between two homologous DNA duplexes (Holliday junction).. In terms of biological role, endonuclease that resolves Holliday junction intermediates in genetic recombination. Cleaves mobile four-strand junctions by introducing symmetrical nicks in paired strands. Promotes annealing of linear ssDNA with homologous dsDNA. Required for DNA repair, homologous recombination and chromosome segregation. In Latilactobacillus sakei subsp. sakei (strain 23K) (Lactobacillus sakei subsp. sakei), this protein is Holliday junction resolvase RecU.